We begin with the raw amino-acid sequence, 216 residues long: MQSFLKLLLSYRIAKMNTTIETEVNYLDQSVESSLYRNGKVYTFRDTDGNDSNWYGAKLTPQKVVINDAREKNHTIDANGFELINAPLLKENLDFLDLNDVVKNYYPQCEDILKKATHASEVYAFDHNIRWKSANEQQTQITDGQQIQQPIYVMHGDYTISSVEDRIYALGKPLGDNDTLKKFLEPGAALIPHNVISKIFDEKKRFSIINVWRNID.

This is an uncharacterized protein from Methylophilus leisingeri (strain DSM 6813 / VKM B-2013 / DM11).